The following is a 385-amino-acid chain: Podocin (385 aa).

Positions 1-27 (MDSRARSSSREAHGRSSRSSSRDDKKA) are enriched in basic and acidic residues. The disordered stretch occupies residues 1-64 (MDSRARSSSR…GEPRAPAATA (64 aa)). The Cytoplasmic portion of the chain corresponds to 1–104 (MDSRARSSSR…IKPSGLGACE (104 aa)). Cysteine 103 carries S-palmitoyl cysteine lipidation. The chain crosses the membrane as a helical span at residues 105-125 (WLLVLASLIFIIMTFPFSIWF). Over 126–385 (CIKVVQEYER…NPKKKDSPML (260 aa)) the chain is Extracellular. Positions 357 to 370 (NRAQGSINYPSSSK) are enriched in polar residues. Residues 357–385 (NRAQGSINYPSSSKPVEPLNPKKKDSPML) form a disordered region. Basic and acidic residues predominate over residues 376–385 (NPKKKDSPML).

It belongs to the band 7/mec-2 family. As to quaternary structure, interacts with nephrin/NPHS1, KIRRL1 and CD2AP. Interacts with DDN.

It is found in the membrane. In terms of biological role, plays a role in the regulation of glomerular permeability, acting probably as a linker between the plasma membrane and the cytoskeleton. The chain is Podocin (Nphs2) from Mus musculus (Mouse).